Reading from the N-terminus, the 262-residue chain is Probable carboxylesterase Culp3 (262 aa).

The N-terminal stretch at 1–41 is a signal peptide; it reads MNNRPIRLLTSGRAGLGAGALITAVVLLIALGAVWTLVAFA. An intrachain disulfide couples cysteine 44 to cysteine 114. Serine 125 serves as the catalytic Nucleophile. Cysteines 188 and 195 form a disulfide. Aspartate 192 is a catalytic residue. Residue histidine 206 is the Proton donor/acceptor of the active site. Residues 241-262 form a disordered region; sequence LPGSVLQMPGTAAPAPESLHGR.

It belongs to the cutinase family.

It is found in the secreted. The chain is Probable carboxylesterase Culp3 (cut3) from Mycobacterium tuberculosis (strain CDC 1551 / Oshkosh).